The primary structure comprises 284 residues: MKKLSIVLLSVSMLSSIAFADNSDRVVATYTGGEVRESQIMKEFKPQLNLPSGETIKNFDDFPPQDQDKLIRIYVNNILLKKEVEKSNITSSKEFQEKLENAKNQLAQKELLENYVKSNLTDKMFDDEYNKYVTSLKGKEQIKVAHILVKSEKEANDLKNKLNKGADFAKLAGESSLDKASATNGGVIGYILLNQPGQLVPEFENKAFALKVNEVSTPVKTDYGWHIIKVLEKKPVPIPTKEEAKMTIDNVLAAEILKKYISDLEAKADLKIMLPPAANNEAKK.

The signal sequence occupies residues 1-20; the sequence is MKKLSIVLLSVSMLSSIAFA. One can recognise a PpiC domain in the interval 139–232; the sequence is KEQIKVAHIL…YGWHIIKVLE (94 aa).

Belongs to the PpiC/parvulin rotamase family.

Its subcellular location is the cell outer membrane. The enzyme catalyses [protein]-peptidylproline (omega=180) = [protein]-peptidylproline (omega=0). This chain is Parvulin-like PPIase (plp), found in Rickettsia bellii (strain RML369-C).